A 280-amino-acid polypeptide reads, in one-letter code: UDP-3-O-acyl-N-acetylglucosamine deacetylase (280 aa).

Zn(2+) is bound by residues His79, His237, and Asp241. His264 functions as the Proton donor in the catalytic mechanism.

It belongs to the LpxC family. Zn(2+) serves as cofactor.

The enzyme catalyses a UDP-3-O-[(3R)-3-hydroxyacyl]-N-acetyl-alpha-D-glucosamine + H2O = a UDP-3-O-[(3R)-3-hydroxyacyl]-alpha-D-glucosamine + acetate. It functions in the pathway glycolipid biosynthesis; lipid IV(A) biosynthesis; lipid IV(A) from (3R)-3-hydroxytetradecanoyl-[acyl-carrier-protein] and UDP-N-acetyl-alpha-D-glucosamine: step 2/6. In terms of biological role, catalyzes the hydrolysis of UDP-3-O-myristoyl-N-acetylglucosamine to form UDP-3-O-myristoylglucosamine and acetate, the committed step in lipid A biosynthesis. The protein is UDP-3-O-acyl-N-acetylglucosamine deacetylase of Chlamydia caviae (strain ATCC VR-813 / DSM 19441 / 03DC25 / GPIC) (Chlamydophila caviae).